Consider the following 336-residue polypeptide: Ferrochelatase (336 aa).

The Fe cation site is built by His-206 and Glu-287.

The protein belongs to the ferrochelatase family.

It localises to the cytoplasm. The enzyme catalyses heme b + 2 H(+) = protoporphyrin IX + Fe(2+). It functions in the pathway porphyrin-containing compound metabolism; protoheme biosynthesis; protoheme from protoporphyrin-IX: step 1/1. Catalyzes the ferrous insertion into protoporphyrin IX. The sequence is that of Ferrochelatase from Neisseria meningitidis serogroup B (strain ATCC BAA-335 / MC58).